The chain runs to 566 residues: Beta,beta-carotene 15,15'-dioxygenase (566 aa).

Residues His172, His237, His308, and His514 each coordinate Fe cation. Residues 529-566 (TPAKTQEDENSDHPTGLTAPGLGHGENDFTAGHGGKSL) are disordered.

Belongs to the carotenoid oxygenase family. The cofactor is Fe(2+).

It is found in the cytoplasm. Its subcellular location is the cytosol. The enzyme catalyses all-trans-beta-carotene + O2 = 2 all-trans-retinal. It participates in cofactor metabolism; retinol metabolism. In terms of biological role, symmetrically cleaves beta-carotene into two molecules of retinal using a dioxygenase mechanism. The sequence is that of Beta,beta-carotene 15,15'-dioxygenase from Rattus norvegicus (Rat).